Here is a 161-residue protein sequence, read N- to C-terminus: MQANSRAYFLLIALVSFGLVGVALYLQFEKGYQPCPLCVMQRFAFIGIGIFSLLAAVAQNTRSLWQGLGMLSGIAGIAVAVYHVSLLLNPKASCGIDPLENWVNALPTAKALPQVFYADGLCTAPLPPVLGLSVPAWSLIWLFILTLTLAVGLIRREKNFR.

Topologically, residues 1 to 8 (MQANSRAY) are cytoplasmic. A helical transmembrane segment spans residues 9 to 25 (FLLIALVSFGLVGVALY). Residues 26–43 (LQFEKGYQPCPLCVMQRF) are Periplasmic-facing. Cys-35 and Cys-38 form a disulfide bridge. Residues 44–58 (AFIGIGIFSLLAAVA) traverse the membrane as a helical segment. At 59–63 (QNTRS) the chain is on the cytoplasmic side. Residues 64–81 (LWQGLGMLSGIAGIAVAV) form a helical membrane-spanning segment. Residues 82 to 136 (YHVSLLLNPKASCGIDPLENWVNALPTAKALPQVFYADGLCTAPLPPVLGLSVPA) are Periplasmic-facing. An intrachain disulfide couples Cys-94 to Cys-122. A helical transmembrane segment spans residues 137–155 (WSLIWLFILTLTLAVGLIR). The Cytoplasmic portion of the chain corresponds to 156 to 161 (REKNFR).

This sequence belongs to the DsbB family.

It is found in the cell inner membrane. Required for disulfide bond formation in some periplasmic proteins. Acts by oxidizing the DsbA protein. The sequence is that of Disulfide bond formation protein B from Cupriavidus necator (strain ATCC 17699 / DSM 428 / KCTC 22496 / NCIMB 10442 / H16 / Stanier 337) (Ralstonia eutropha).